We begin with the raw amino-acid sequence, 1885 residues long: Chitin synthase 5 (1885 aa).

Residues 1-789 enclose the Myosin motor domain; the sequence is MATRGNVPAH…SIALTGSQAA (789 aa). 99 to 106 provides a ligand contact to ATP; that stretch reads GESGSGKT. Residues asparagine 219 and asparagine 429 are each glycosylated (N-linked (GlcNAc...) asparagine). The disordered stretch occupies residues 601–649; sequence KPLRMPSVSRKKHDQLRRMASRRADRSPAPQEEEPLPGTEEAKVRRTKP. The segment covering 609–621 has biased composition (basic residues); it reads SRKKHDQLRRMAS. Residues 666–690 are actin-binding; it reads LDNITKSLTAPNVNNYFVFCLKPND. N-linked (GlcNAc...) asparagine glycosylation occurs at asparagine 668. The segment at 794 to 817 is disordered; that stretch reads GDIGSPSRPDTPGHNPFSDSKARL. A run of 2 helical transmembrane segments spans residues 894 to 914 and 929 to 949; these read WLAIVYFLTWYLPDFAIKWIG and FAINLLIWLSCGLVVFFIIVF. Residues 957-1016 form the Cytochrome b5 heme-binding domain; that stretch reads QNVYSAAELSAHDGKGKHSAYVAIRGQVFDLGAFMPNHYPKIIPQSSLKKYAGVDATGLF. N-linked (GlcNAc...) asparagine glycosylation is found at asparagine 1043 and asparagine 1068. A helical transmembrane segment spans residues 1205 to 1225; sequence ILLAVSILLCSVIGFKFFAAL. 2 N-linked (GlcNAc...) asparagine glycosylation sites follow: asparagine 1462 and asparagine 1568. Transmembrane regions (helical) follow at residues 1599–1619, 1626–1646, and 1653–1673; these read LLSTVVAPVTVAYIAYLIVLL, VPLTAFILLGAIYGLQAIIFI, and MIGWMIVYILAMPVFSLGLPL. N-linked (GlcNAc...) asparagine glycans are attached at residues asparagine 1759 and asparagine 1790. Residues 1827–1882 enclose the DEK-C domain; it reads LPTDDMLLNEIRDILRTADLMTVTKKGIKQELERRFNVNLDMKRAYIGSATEAILS.

The protein in the N-terminal section; belongs to the TRAFAC class myosin-kinesin ATPase superfamily. Myosin family. This sequence in the C-terminal section; belongs to the chitin synthase family. Class V subfamily. Maximal activity requires trypsin activation, suggesting a zymogenic nature.

The protein localises to the cell membrane. It is found in the membrane. It catalyses the reaction [(1-&gt;4)-N-acetyl-beta-D-glucosaminyl](n) + UDP-N-acetyl-alpha-D-glucosamine = [(1-&gt;4)-N-acetyl-beta-D-glucosaminyl](n+1) + UDP + H(+). Polymerizes chitin, a structural polymer of the cell wall and septum, by transferring the sugar moiety of UDP-GlcNAc to the non-reducing end of the growing chitin polymer. CHS5 is required for the sustained growth at 37 degrees Celsius and is of critical importance for virulence. Especially important at infection temperatures for maintaining the cell wall integrity of developing yeast buds, elongating tips of hyphae, and random sites of expansion in sclerotic forms. The protein is Chitin synthase 5 of Exophiala dermatitidis (strain ATCC 34100 / CBS 525.76 / NIH/UT8656) (Black yeast).